Reading from the N-terminus, the 700-residue chain is Methionine synthase reductase (700 aa).

Residues 4-147 (FLLLYATQRG…VVEPWIDGLW (144 aa)) form the Flavodoxin-like domain. FMN is bound by residues 10–14 (TQRGQ) and 93–124 (LLGL…QHFY). Residues 168–247 (TLAQASDAPL…SSLSIPAVSP (80 aa)) are hinge. Phosphoserine occurs at positions 173 and 190. The FAD-binding FR-type domain occupies 272-534 (DPIFQVPISK…PRATNSFHLP (263 aa)). Lys292 is a binding site for NADP(+). FAD-binding positions include 452 to 455 (RPYS) and 488 to 491 (GVCT). NADP(+)-binding positions include 611–612 (SR), 626–628 (YVQ), and Asp661. Trp699 contributes to the FAD binding site.

In terms of assembly, forms a multiprotein complex with MMACHC, MMADHC and MTR. The cofactor is FAD. It depends on FMN as a cofactor.

The protein resides in the cytoplasm. It carries out the reaction 2 methylcob(III)alamin-[methionine synthase] + 2 S-adenosyl-L-homocysteine + NADP(+) + H(+) = 2 cob(II)alamin-[methionine synthase] + 2 S-adenosyl-L-methionine + NADPH. The catalysed reaction is 2 cob(II)alamin + A + 2 H2O + 2 H(+) = 2 aquacob(III)alamin + AH2. Key enzyme in methionine and folate homeostasis responsible for the reactivation of methionine synthase (MTR/MS) activity by catalyzing the reductive methylation of MTR-bound cob(II)alamin. Cobalamin (vitamin B12) forms a complex with MTR to serve as an intermediary in methyl transfer reactions that cycles between MTR-bound methylcob(III)alamin and MTR bound-cob(I)alamin forms, and occasional oxidative escape of the cob(I)alamin intermediate during the catalytic cycle leads to the inactive cob(II)alamin species. The processing of cobalamin in the cytosol occurs in a multiprotein complex composed of at least MMACHC, MMADHC, MTRR and MTR which may contribute to shuttle safely and efficiently cobalamin towards MTR in order to produce methionine. Also necessary for the utilization of methyl groups from the folate cycle, thereby affecting transgenerational epigenetic inheritance. Also acts as a molecular chaperone for methionine synthase by stabilizing apoMTR and incorporating methylcob(III)alamin into apoMTR to form the holoenzyme. Also serves as an aquacob(III)alamin reductase by reducing aquacob(III)alamin to cob(II)alamin; this reduction leads to stimulation of the conversion of apoMTR and aquacob(III)alamin to MTR holoenzyme. The chain is Methionine synthase reductase (Mtrr) from Rattus norvegicus (Rat).